The following is a 484-amino-acid chain: uncharacterized protein (484 aa).

The FAD-binding PCMH-type domain maps to 47–226 (TLPIPAAVVK…TEVTVKIFKF (180 aa)).

This sequence belongs to the FAD-binding oxidoreductase/transferase type 4 family.

This is an uncharacterized protein from Escherichia coli O157:H7.